Consider the following 130-residue polypeptide: Small ribosomal subunit protein uS9 (130 aa).

Belongs to the universal ribosomal protein uS9 family.

The polypeptide is Small ribosomal subunit protein uS9 (Shewanella denitrificans (strain OS217 / ATCC BAA-1090 / DSM 15013)).